Here is a 460-residue protein sequence, read N- to C-terminus: Bifunctional protein GlmU (460 aa).

Residues 1 to 232 (MALNVVILAA…AIEVEGANNR (232 aa)) are pyrophosphorylase. UDP-N-acetyl-alpha-D-glucosamine-binding positions include 8 to 11 (LAAG), Lys22, Gln73, 78 to 79 (GT), 100 to 102 (YGD), Gly137, Glu157, Asn172, and Asn230. Asp102 is a Mg(2+) binding site. Asn230 contributes to the Mg(2+) binding site. The interval 233–253 (VQLAQLERAYQAREAEKLMLA) is linker. Residues 254 to 460 (GANLRDPSRI…GWQRPVKIKK (207 aa)) form an N-acetyltransferase region. Arg336 and Lys354 together coordinate UDP-N-acetyl-alpha-D-glucosamine. Residue His366 is the Proton acceptor of the active site. Residues Tyr369 and Asn380 each contribute to the UDP-N-acetyl-alpha-D-glucosamine site. Residues Ala383, 389–390 (NY), Ser408, Ala426, and Arg443 contribute to the acetyl-CoA site.

It in the N-terminal section; belongs to the N-acetylglucosamine-1-phosphate uridyltransferase family. This sequence in the C-terminal section; belongs to the transferase hexapeptide repeat family. In terms of assembly, homotrimer. The cofactor is Mg(2+).

Its subcellular location is the cytoplasm. The enzyme catalyses alpha-D-glucosamine 1-phosphate + acetyl-CoA = N-acetyl-alpha-D-glucosamine 1-phosphate + CoA + H(+). It catalyses the reaction N-acetyl-alpha-D-glucosamine 1-phosphate + UTP + H(+) = UDP-N-acetyl-alpha-D-glucosamine + diphosphate. Its pathway is nucleotide-sugar biosynthesis; UDP-N-acetyl-alpha-D-glucosamine biosynthesis; N-acetyl-alpha-D-glucosamine 1-phosphate from alpha-D-glucosamine 6-phosphate (route II): step 2/2. It participates in nucleotide-sugar biosynthesis; UDP-N-acetyl-alpha-D-glucosamine biosynthesis; UDP-N-acetyl-alpha-D-glucosamine from N-acetyl-alpha-D-glucosamine 1-phosphate: step 1/1. It functions in the pathway bacterial outer membrane biogenesis; LPS lipid A biosynthesis. In terms of biological role, catalyzes the last two sequential reactions in the de novo biosynthetic pathway for UDP-N-acetylglucosamine (UDP-GlcNAc). The C-terminal domain catalyzes the transfer of acetyl group from acetyl coenzyme A to glucosamine-1-phosphate (GlcN-1-P) to produce N-acetylglucosamine-1-phosphate (GlcNAc-1-P), which is converted into UDP-GlcNAc by the transfer of uridine 5-monophosphate (from uridine 5-triphosphate), a reaction catalyzed by the N-terminal domain. The sequence is that of Bifunctional protein GlmU from Shewanella baltica (strain OS155 / ATCC BAA-1091).